A 302-amino-acid polypeptide reads, in one-letter code: Acetaldehyde dehydrogenase 2 (302 aa).

The active-site Acyl-thioester intermediate is the cysteine 130. NAD(+) is bound by residues 161–169 (SVGPGTRRN) and asparagine 272.

The protein belongs to the acetaldehyde dehydrogenase family.

It carries out the reaction acetaldehyde + NAD(+) + CoA = acetyl-CoA + NADH + H(+). The sequence is that of Acetaldehyde dehydrogenase 2 from Cupriavidus necator (strain ATCC 17699 / DSM 428 / KCTC 22496 / NCIMB 10442 / H16 / Stanier 337) (Ralstonia eutropha).